We begin with the raw amino-acid sequence, 341 residues long: Dihydroorotate dehydrogenase (quinone) (341 aa).

FMN-binding positions include 59-63 (AGLDK) and T83. Residue K63 participates in substrate binding. 108–112 (NRMGF) contacts substrate. The FMN site is built by N136 and N169. N169 provides a ligand contact to substrate. S172 acts as the Nucleophile in catalysis. Residue N174 coordinates substrate. Residues K214 and T242 each contribute to the FMN site. 243–244 (NT) is a binding site for substrate. FMN is bound by residues G265, G294, and 315–316 (YS).

The protein belongs to the dihydroorotate dehydrogenase family. Type 2 subfamily. Monomer. FMN serves as cofactor.

It is found in the cell membrane. It catalyses the reaction (S)-dihydroorotate + a quinone = orotate + a quinol. It functions in the pathway pyrimidine metabolism; UMP biosynthesis via de novo pathway; orotate from (S)-dihydroorotate (quinone route): step 1/1. Catalyzes the conversion of dihydroorotate to orotate with quinone as electron acceptor. The sequence is that of Dihydroorotate dehydrogenase (quinone) from Neisseria meningitidis serogroup C (strain 053442).